Reading from the N-terminus, the 253-residue chain is 5'-nucleotidase SurE (253 aa).

Residues Asp8, Asp9, Ser39, and Asn95 each contribute to the a divalent metal cation site.

This sequence belongs to the SurE nucleotidase family. Requires a divalent metal cation as cofactor.

It is found in the cytoplasm. It carries out the reaction a ribonucleoside 5'-phosphate + H2O = a ribonucleoside + phosphate. In terms of biological role, nucleotidase that shows phosphatase activity on nucleoside 5'-monophosphates. The chain is 5'-nucleotidase SurE from Desulfatibacillum aliphaticivorans.